The following is a 367-amino-acid chain: Probable cinnamyl alcohol dehydrogenase (367 aa).

Residue C47 participates in Zn(2+) binding. T49 lines the NADP(+) pocket. Residues H69, E70, C100, C103, C106, C114, and C163 each coordinate Zn(2+). NADP(+)-binding positions include T167, 188–193 (GLGGVG), 211–216 (SSSSKK), T251, G275, and 298–300 (SFI).

The protein belongs to the zinc-containing alcohol dehydrogenase family. As to quaternary structure, homodimer. Zn(2+) is required as a cofactor.

The enzyme catalyses (E)-cinnamyl alcohol + NADP(+) = (E)-cinnamaldehyde + NADPH + H(+). It carries out the reaction (E)-coniferol + NADP(+) = (E)-coniferaldehyde + NADPH + H(+). It catalyses the reaction (E)-sinapyl alcohol + NADP(+) = (E)-sinapaldehyde + NADPH + H(+). The catalysed reaction is (E)-4-coumaroyl alcohol + NADP(+) = (E)-4-coumaraldehyde + NADPH + H(+). The enzyme catalyses (E)-caffeyl alcohol + NADP(+) = (E)-caffeyl aldehyde + NADPH + H(+). It functions in the pathway aromatic compound metabolism; phenylpropanoid biosynthesis. In terms of biological role, involved in lignin biosynthesis. May catalyze the final step specific for the production of lignin monomers, like coniferyl alcohol, sinapyl alcohol and 4-coumaryl alcohol. This is Probable cinnamyl alcohol dehydrogenase from Zea mays (Maize).